The chain runs to 492 residues: UTP--glucose-1-phosphate uridylyltransferase (492 aa).

Residues 110-113, Lys-124, Gln-183, and Gly-210 each bind UTP; that span reads LNGG. 112–113 provides a ligand contact to substrate; the sequence is GG. Position 124 (Lys-124) interacts with Mg(2+). Residues His-211 and 239–241 contribute to the substrate site; that span reads NID. UTP contacts are provided by Asp-241 and Lys-379. Asp-241 is a Mg(2+) binding site. Lys-379 is a catalytic residue. Positions 441 to 492 are oligomerization; it reads VLTVSGNVLFGKNVVLKGTVIILADEKSKICVPDGSVLEDNIIYGNLPIIDH.

Belongs to the UDPGP type 1 family. In terms of assembly, homooctamer.

The catalysed reaction is alpha-D-glucose 1-phosphate + UTP + H(+) = UDP-alpha-D-glucose + diphosphate. Functionally, plays a central role as a glucosyl donor in cellular metabolic pathways. The chain is UTP--glucose-1-phosphate uridylyltransferase (UGP1) from Encephalitozoon cuniculi (strain GB-M1) (Microsporidian parasite).